The chain runs to 66 residues: Phylloseptin-H9 (66 aa).

The first 22 residues, 1-22, serve as a signal peptide directing secretion; sequence MAFLKKSLFLVLFLGLVSLSIC. A propeptide spanning residues 23-44 is cleaved from the precursor; the sequence is EEEKRETEEEENDQEEDDKSEE. Residues 24-44 form a disordered region; that stretch reads EEKRETEEEENDQEEDDKSEE. Residues 30–41 show a composition bias toward acidic residues; that stretch reads EEEENDQEEDDK. Leu65 carries the leucine amide modification.

As to expression, expressed by the skin glands.

The protein resides in the secreted. In terms of biological role, has antimicrobial activity. This Pithecopus hypochondrialis (Orange-legged leaf frog) protein is Phylloseptin-H9.